The chain runs to 194 residues: Inosine triphosphate pyrophosphatase (194 aa).

8–13 is a binding site for ITP; it reads TGNANK. Mg(2+) is bound at residue Glu-47. ITP contacts are provided by residues Lys-59, 75–76, Lys-92, 151–154, Lys-174, and 179–180; these read DT, FGWD, and HR.

Belongs to the HAM1 NTPase family. In terms of assembly, homodimer. Mg(2+) serves as cofactor. Mn(2+) is required as a cofactor.

The protein localises to the cytoplasm. It localises to the nucleus. It catalyses the reaction ITP + H2O = IMP + diphosphate + H(+). The catalysed reaction is dITP + H2O = dIMP + diphosphate + H(+). The enzyme catalyses XTP + H2O = XMP + diphosphate + H(+). Functionally, pyrophosphatase that hydrolyzes non-canonical purine nucleotides such as inosine triphosphate (ITP), deoxyinosine triphosphate (dITP) or xanthosine 5'-triphosphate (XTP) to their respective monophosphate derivatives. The enzyme does not distinguish between the deoxy- and ribose forms. Probably excludes non-canonical purines from RNA and DNA precursor pools, thus preventing their incorporation into RNA and DNA and avoiding chromosomal lesions. The polypeptide is Inosine triphosphate pyrophosphatase (Scheffersomyces stipitis (strain ATCC 58785 / CBS 6054 / NBRC 10063 / NRRL Y-11545) (Yeast)).